The primary structure comprises 586 residues: Clathrin heavy chain linker domain-containing protein 1 (586 aa).

A coiled-coil region spans residues 174-232 (MNLDALTKYMKHLEDKYAEIKQAMLIKYVPAQRKSDLDEEMIVLLKRRDVAENLNRKLQ).

The chain is Clathrin heavy chain linker domain-containing protein 1 (CLHC1) from Macaca fascicularis (Crab-eating macaque).